The primary structure comprises 142 residues: Large ribosomal subunit protein uL11 (142 aa).

Belongs to the universal ribosomal protein uL11 family. In terms of assembly, part of the ribosomal stalk of the 50S ribosomal subunit. Interacts with L10 and the large rRNA to form the base of the stalk. L10 forms an elongated spine to which L12 dimers bind in a sequential fashion forming a multimeric L10(L12)X complex. One or more lysine residues are methylated.

In terms of biological role, forms part of the ribosomal stalk which helps the ribosome interact with GTP-bound translation factors. The chain is Large ribosomal subunit protein uL11 from Desulforudis audaxviator (strain MP104C).